The primary structure comprises 901 residues: Quinate repressor protein (901 aa).

The segment at 1–88 (MSILVRPPKR…DSLQTRRKFP (88 aa)) is sufficient for repression. Disordered regions lie at residues 26–59 (LRDF…DGSR) and 878–901 (EEQG…GQPM). Positions 31 to 43 (QGNSASTPINTSA) are enriched in polar residues.

It in the N-terminal section; belongs to the shikimate kinase family. This sequence in the 2nd section; belongs to the type-I 3-dehydroquinase family. The protein in the C-terminal section; belongs to the shikimate dehydrogenase family. Interacts with qutA; transcriptional activator of the quinate utilization pathway genes.

Multi-domain repressor protein that negatively regulates transcription of the quinate utilization pathway genes. May mediate its repressor activity by binding directly to the qutA activator protein. This chain is Quinate repressor protein (qutR), found in Emericella nidulans (strain FGSC A4 / ATCC 38163 / CBS 112.46 / NRRL 194 / M139) (Aspergillus nidulans).